Here is a 150-residue protein sequence, read N- to C-terminus: Linear element protein rec25 (150 aa).

S11 is modified (phosphoserine).

Component of linear elements (LinEs), which are similar to synaptonemal complexes, at least composed of rec27, rec25, rec10 and mug20. Interacts with rec10; the interaction is direct.

Its subcellular location is the cytoplasm. It localises to the nucleus. It is found in the chromosome. Its function is as follows. During meiotic DNA recombination, binds to and may help activate DNA double-strand break (DSB) hotspot sites. This chain is Linear element protein rec25, found in Schizosaccharomyces pombe (strain 972 / ATCC 24843) (Fission yeast).